We begin with the raw amino-acid sequence, 398 residues long: Phosphoglycerate kinase (398 aa).

Substrate-binding positions include 21–23 (DFN), Arg-36, 59–62 (HLGR), Arg-119, and Arg-157. Residues Lys-208, Gly-296, Glu-327, and 354–357 (GGDS) contribute to the ATP site.

It belongs to the phosphoglycerate kinase family. Monomer.

It localises to the cytoplasm. It carries out the reaction (2R)-3-phosphoglycerate + ATP = (2R)-3-phospho-glyceroyl phosphate + ADP. It functions in the pathway carbohydrate degradation; glycolysis; pyruvate from D-glyceraldehyde 3-phosphate: step 2/5. This chain is Phosphoglycerate kinase, found in Streptococcus pneumoniae (strain 70585).